The following is a 297-amino-acid chain: ATP phosphoribosyltransferase (297 aa).

This sequence belongs to the ATP phosphoribosyltransferase family.

It is found in the cytoplasm. The enzyme catalyses 1-(5-phospho-beta-D-ribosyl)-ATP + diphosphate = 5-phospho-alpha-D-ribose 1-diphosphate + ATP. It functions in the pathway amino-acid biosynthesis; L-histidine biosynthesis; L-histidine from 5-phospho-alpha-D-ribose 1-diphosphate: step 1/9. Functionally, catalyzes the condensation of ATP and 5-phosphoribose 1-diphosphate to form N'-(5'-phosphoribosyl)-ATP (PR-ATP). Has a crucial role in the pathway because the rate of histidine biosynthesis seems to be controlled primarily by regulation of the enzymatic activity. The polypeptide is ATP phosphoribosyltransferase (HIS1) (Kluyveromyces lactis (strain ATCC 8585 / CBS 2359 / DSM 70799 / NBRC 1267 / NRRL Y-1140 / WM37) (Yeast)).